The chain runs to 525 residues: D-3-phosphoglycerate dehydrogenase (525 aa).

Residues 148-149 (RI), D168, T200, 227-229 (CAR), and D253 each bind NAD(+). Residue R229 is part of the active site. Residue E258 is part of the active site. H276 functions as the Proton donor in the catalytic mechanism. 276–279 (HLGA) provides a ligand contact to NAD(+). One can recognise an ACT domain in the interval 452-524 (LVYIQHQDTT…DIVSVKLIDL (73 aa)).

The protein belongs to the D-isomer specific 2-hydroxyacid dehydrogenase family.

The catalysed reaction is (2R)-3-phosphoglycerate + NAD(+) = 3-phosphooxypyruvate + NADH + H(+). It carries out the reaction (R)-2-hydroxyglutarate + NAD(+) = 2-oxoglutarate + NADH + H(+). It participates in amino-acid biosynthesis; L-serine biosynthesis; L-serine from 3-phospho-D-glycerate: step 1/3. In bacteria displays feedback inhibition by L-serine. Functionally, catalyzes the reversible oxidation of 3-phospho-D-glycerate to 3-phosphonooxypyruvate, the first step of the phosphorylated L-serine biosynthesis pathway. Also catalyzes the reversible oxidation of 2-hydroxyglutarate to 2-oxoglutarate. This is D-3-phosphoglycerate dehydrogenase (serA) from Bacillus subtilis (strain 168).